A 2620-amino-acid chain; its full sequence is Ankyrin repeat and KH domain-containing protein mask-1 (2620 aa).

ANK repeat units follow at residues 254 to 283, 288 to 318, 361 to 390, 402 to 431, 437 to 466, 470 to 502, 507 to 536, 538 to 566, 568 to 597, 600 to 629, 634 to 663, and 667 to 697; these read SKIT…DPNV, NCNT…KKPD, ERDS…KNPP, ERYS…PADL, IEPS…KIEE, KKNT…EVDV, TGDT…DLTA, KTSP…TIPQ, QLSR…DLNF, DERT…SVNF, NDAT…DPML, and DGVN…NMPM. Disordered regions lie at residues 699–726, 994–1032, and 1192–1229; these read KDPP…SGQD, HQEE…QPGA, and SLMA…AIDK. Positions 1012–1029 are enriched in polar residues; that stretch reads TSLTAPNPADTSDVTTKQ. Positions 1192-1206 are enriched in low complexity; that stretch reads SLMAKSVQSQQQQGQ. Positions 1210–1221 are enriched in basic and acidic residues; it reads THSEGDGAERAK. 10 ANK repeats span residues 1234–1263, 1267–1296, 1301–1330, 1334–1363, 1369–1398, 1403–1432, 1436–1465, 1471–1500, 1504–1533, and 1537–1566; these read TLET…NIEH, KGFS…AIEA, TKDT…NKEH, SDYT…EINS, LGIS…DINA, NRNT…NVEH, TGLT…DTNA, TKDT…AVDV, KGCT…DPDM, and RKIS…QFPN. Residues 1596-1648 adopt a coiled-coil conformation; the sequence is AKKAQAESAELAAQKLLELIDEEKVQKEVKKQKQKDKKIKKKEEKKIKKQEAE. 2 disordered regions span residues 1621–1720 and 1759–1804; these read QKEV…AEEP and KEGK…EIDT. Over residues 1636–1647 the composition is skewed to basic and acidic residues; it reads KKEEKKIKKQEA. The span at 1648–1661 shows a compositional bias: acidic residues; the sequence is EPEPEPEPEPEPVP. 2 stretches are compositionally biased toward low complexity: residues 1665–1681 and 1769–1791; these read PVVI…IVVE and KSGY…TTSS. Positions 1807–1873 constitute a KH domain; it reads ESSWKLTIPA…EMVRYAMNII (67 aa). The segment covering 1899 to 1913 has biased composition (polar residues); it reads ASSFSSEGTSKSAVD. 8 disordered regions span residues 1899–1962, 1976–2010, 2067–2143, 2267–2294, 2307–2343, 2372–2391, 2429–2448, and 2496–2620; these read ASSF…GNVW, LMET…QASE, SVQS…QTQN, NATS…VTTG, SFAP…QQQQ, QHQS…KFSM, QESS…NSYY, and QKKQ…SSNW. Over residues 1917 to 1946 the composition is skewed to low complexity; sequence APSSIPKSLSSASIARQSASPIPQQSSQRS. The span at 1982–1993 shows a compositional bias: polar residues; the sequence is ISQSPKQAPQIP. 3 stretches are compositionally biased toward low complexity: residues 1994-2006, 2067-2078, and 2100-2118; these read STQQ…SRQD, SVQSVQHMQQQQ, and SQPI…SSFS. 2 stretches are compositionally biased toward polar residues: residues 2267 to 2286 and 2325 to 2339; these read NATS…VQQP and RSQS…STNI. Residues 2505–2528 are compositionally biased toward polar residues; sequence SFMHNSQQPQPFGAPSNASANQSR. Positions 2535–2547 are enriched in pro residues; that stretch reads RPQPPPFVAPQAP. The span at 2552 to 2565 shows a compositional bias: polar residues; the sequence is SLGNASSTTNPSRT. Composition is skewed to low complexity over residues 2566 to 2588 and 2597 to 2620; these read SMQQ…QMPQ and QQQQ…SSNW.

Belongs to the mask family.

It localises to the cytoplasm. This chain is Ankyrin repeat and KH domain-containing protein mask-1, found in Caenorhabditis elegans.